The chain runs to 335 residues: BTB and MATH domain-containing protein 39 (335 aa).

In terms of domain architecture, MATH spans 14-141 (MKTLCFKIMN…NGVFTIEFDL (128 aa)). The 66-residue stretch at 161–226 (ADGKLIVEDQ…LQLDEFKVNV (66 aa)) folds into the BTB domain.

This chain is BTB and MATH domain-containing protein 39, found in Caenorhabditis briggsae.